A 288-amino-acid chain; its full sequence is Sulfur carrier protein FdhD (288 aa).

A disordered region spans residues 1–23; the sequence is MMRCMQSPEVHPAAAGDAEPPTH. The active-site Cysteine persulfide intermediate is the Cys127.

This sequence belongs to the FdhD family.

Its subcellular location is the cytoplasm. Functionally, required for formate dehydrogenase (FDH) activity. Acts as a sulfur carrier protein that transfers sulfur from IscS to the molybdenum cofactor prior to its insertion into FDH. In Cupriavidus necator (strain ATCC 17699 / DSM 428 / KCTC 22496 / NCIMB 10442 / H16 / Stanier 337) (Ralstonia eutropha), this protein is Sulfur carrier protein FdhD.